A 180-amino-acid chain; its full sequence is ATP synthase subunit delta (180 aa).

Belongs to the ATPase delta chain family. As to quaternary structure, F-type ATPases have 2 components, F(1) - the catalytic core - and F(0) - the membrane proton channel. F(1) has five subunits: alpha(3), beta(3), gamma(1), delta(1), epsilon(1). F(0) has three main subunits: a(1), b(2) and c(10-14). The alpha and beta chains form an alternating ring which encloses part of the gamma chain. F(1) is attached to F(0) by a central stalk formed by the gamma and epsilon chains, while a peripheral stalk is formed by the delta and b chains.

Its subcellular location is the cell membrane. Functionally, f(1)F(0) ATP synthase produces ATP from ADP in the presence of a proton or sodium gradient. F-type ATPases consist of two structural domains, F(1) containing the extramembraneous catalytic core and F(0) containing the membrane proton channel, linked together by a central stalk and a peripheral stalk. During catalysis, ATP synthesis in the catalytic domain of F(1) is coupled via a rotary mechanism of the central stalk subunits to proton translocation. Its function is as follows. This protein is part of the stalk that links CF(0) to CF(1). It either transmits conformational changes from CF(0) to CF(1) or is implicated in proton conduction. In Bacillus mycoides (strain KBAB4) (Bacillus weihenstephanensis), this protein is ATP synthase subunit delta.